We begin with the raw amino-acid sequence, 743 residues long: MMTQANAYFYDGADVALLNGQYTDVFSLLGMHSANEGKALIVRCFLRNALSVDVISIKDGRKVASLDKVNEQGLFAGTLGRRVKPFLYLLRVEYPLCQLDIVDPYQFDSLLNSDDIYLFGEGSAERAYEFLGANWRQTQGVEGVHFCVWAPNAKRVSVVGDFNHWDDTRHVMRQHLANGLWELFLPNVVEGAHYKFDLVYQNGERHTKSDPMATQMECAPHNASIVPPKAHHSWNDTAWMSKRAATAWHKAPMSAYEVHLGSWRRKGEQGEQYLDYQDLIEQLIPYVKEQGFTHIELMPISEFPFDGSWGYQPVGLYAPTHRFGDANGLKAFVDACHQAGIGIILDWVSAHFPKDPHGLVRFDGTCLYEHEDPRKGTHPDWDTLIYNYDRGEVRSFLLSNACYWLREFHFDGLRLDAVSSMLYLDYSREPGQWLPNAYGGRENLEAISFLQILNQRLYQAFPGVCMIAEESTAFAGVTKPTDQQGLGFGFKWNMGWMNDSLSYLGRDPLYRQFHHHQLTFSLMYAYTEQFMLSVSHDEVVHGKGSLLHKIPGDDWQKFATLRAYYGFMWGHPGKKLLFMGCEFGQRNEWNHNQSLDWHLLAYEPHQGVQRWLKDLNHLYQAMPALSVQDYEGAGFSWLDCENSRDSIFTFVRYGLAGDAPLVFVINMTPQLHTGFRIGLPLAGDYREYLNSDSQIYGGSNQGNAGTVVAESLPWQGMAQSALITVPPLGCLVIGPATGLAEAN.

D416 (nucleophile) is an active-site residue. The active-site Proton donor is E469.

This sequence belongs to the glycosyl hydrolase 13 family. GlgB subfamily. In terms of assembly, monomer.

The catalysed reaction is Transfers a segment of a (1-&gt;4)-alpha-D-glucan chain to a primary hydroxy group in a similar glucan chain.. Its pathway is glycan biosynthesis; glycogen biosynthesis. Catalyzes the formation of the alpha-1,6-glucosidic linkages in glycogen by scission of a 1,4-alpha-linked oligosaccharide from growing alpha-1,4-glucan chains and the subsequent attachment of the oligosaccharide to the alpha-1,6 position. This chain is 1,4-alpha-glucan branching enzyme GlgB, found in Shewanella baltica (strain OS185).